Here is a 235-residue protein sequence, read N- to C-terminus: MKDELFKQSPKKQFEFDKSVASVFDDMINRSVPFYRENLELCGNLLAKILSTNASVCDLGCSSANFLIFLANLRKDFKLFGVDNSASMLEVAKSKAKAYGLDISFFEANLCEFDFFVCDVFVANYTMQFIRPPKRQELLDKIYKNLNSKGILIMSEKILYEDAFLSKNIIELYADYKEKQGYSKFEIAAKREALENVLIPYSQKENLNMLEKAGFKKIESIFKWANFETFIAFKD.

S-adenosyl-L-methionine contacts are provided by residues Tyr35, 60–62 (GCS), 83–84 (DN), Asn124, and Arg191.

This sequence belongs to the class I-like SAM-binding methyltransferase superfamily. Cx-SAM synthase family. As to quaternary structure, homodimer.

It carries out the reaction prephenate + S-adenosyl-L-methionine = carboxy-S-adenosyl-L-methionine + 3-phenylpyruvate + H2O. Its function is as follows. Catalyzes the conversion of S-adenosyl-L-methionine (SAM) to carboxy-S-adenosyl-L-methionine (Cx-SAM). In Campylobacter jejuni subsp. jejuni serotype O:23/36 (strain 81-176), this protein is Carboxy-S-adenosyl-L-methionine synthase.